The following is a 140-amino-acid chain: 3-hydroxyacyl-[acyl-carrier-protein] dehydratase FabZ (140 aa).

His47 is a catalytic residue.

The protein belongs to the thioester dehydratase family. FabZ subfamily.

It localises to the cytoplasm. It carries out the reaction a (3R)-hydroxyacyl-[ACP] = a (2E)-enoyl-[ACP] + H2O. Involved in unsaturated fatty acids biosynthesis. Catalyzes the dehydration of short chain beta-hydroxyacyl-ACPs and long chain saturated and unsaturated beta-hydroxyacyl-ACPs. The sequence is that of 3-hydroxyacyl-[acyl-carrier-protein] dehydratase FabZ from Streptococcus pneumoniae (strain 70585).